Reading from the N-terminus, the 483-residue chain is Aspartyl/glutamyl-tRNA(Asn/Gln) amidotransferase subunit B (483 aa).

It belongs to the GatB/GatE family. GatB subfamily. As to quaternary structure, heterotrimer of A, B and C subunits.

It catalyses the reaction L-glutamyl-tRNA(Gln) + L-glutamine + ATP + H2O = L-glutaminyl-tRNA(Gln) + L-glutamate + ADP + phosphate + H(+). The catalysed reaction is L-aspartyl-tRNA(Asn) + L-glutamine + ATP + H2O = L-asparaginyl-tRNA(Asn) + L-glutamate + ADP + phosphate + 2 H(+). In terms of biological role, allows the formation of correctly charged Asn-tRNA(Asn) or Gln-tRNA(Gln) through the transamidation of misacylated Asp-tRNA(Asn) or Glu-tRNA(Gln) in organisms which lack either or both of asparaginyl-tRNA or glutaminyl-tRNA synthetases. The reaction takes place in the presence of glutamine and ATP through an activated phospho-Asp-tRNA(Asn) or phospho-Glu-tRNA(Gln). This Thermomicrobium roseum (strain ATCC 27502 / DSM 5159 / P-2) protein is Aspartyl/glutamyl-tRNA(Asn/Gln) amidotransferase subunit B.